Consider the following 699-residue polypeptide: Conditioned medium factor (699 aa).

Positions methionine 1 to glycine 18 are cleaved as a signal peptide. Asparagine 130, asparagine 283, asparagine 346, and asparagine 430 each carry an N-linked (GlcNAc...) asparagine glycan. The segment at serine 680–tryptophan 699 is disordered.

Post-translationally, N- and O-glycosylated. The N-terminus is blocked.

Functionally, involved in cell density sensing and might synchronize the onset of development by triggering aggregation when a majority of the cells in a given area have starved. In Dictyostelium discoideum (Social amoeba), this protein is Conditioned medium factor (cmfA).